Reading from the N-terminus, the 287-residue chain is Aquaporin PIP2-1 (287 aa).

The residue at position 1 (methionine 1) is an N-acetylmethionine. The Cytoplasmic portion of the chain corresponds to 2–39 (AKDVEAVPGEGFQTRDYQDPPPAPFIDGAELKKWSFYR). N6,N6-dimethyllysine; partial is present on lysine 3. The helical transmembrane segment at 40–60 (AVIAEFVATLLFLYITVLTVI) threads the bilayer. Residues 61–83 (GYKIQSDTDAGGVDCGGVGILGI) lie on the Extracellular side of the membrane. A helical transmembrane segment spans residues 84 to 104 (AWAFGGMIFILVYCTAGISGG). Residues 105 to 125 (HINPAVTFGLFLARKVSLPRA) lie on the Cytoplasmic side of the membrane. Positions 107–109 (NPA) match the NPA 1 motif. Residues 126-146 (LLYIIAQCLGAICGVGFVKAF) traverse the membrane as a helical segment. Over 147–167 (QSSYYTRYGGGANSLADGYST) the chain is Extracellular. The chain crosses the membrane as a helical span at residues 168-188 (GTGLAAEIIGTFVLVYTVFSA). The Cytoplasmic segment spans residues 189-201 (TDPKRSARDSHVP). A helical transmembrane segment spans residues 202-222 (VLAPLPIGFAVFMVHLATIPI). At 223 to 249 (TGTGINPARSFGAAVIYNKSKPWDDHW) the chain is on the extracellular side. Residues 228-230 (NPA) carry the NPA 2 motif. A helical transmembrane segment spans residues 250–270 (IFWVGPFIGAAIAAFYHQFVL). Residues 271 to 287 (RASGSKSLGSFRSAANV) are Cytoplasmic-facing. Residues serine 280 and serine 283 each carry the phosphoserine modification.

The protein belongs to the MIP/aquaporin (TC 1.A.8) family. PIP (TC 1.A.8.11) subfamily. Ubiquitinated by RMA1, leading to proteasomal degradation. In terms of processing, the phosphorylation at Ser-280 and Ser-283 is altered by salt (NaCl) and hydrogen peroxide H(2)O(2) treatments. Phosphorylation of Ser-283 is required for plasma membrane targeting. As to expression, predominantly expressed in roots and green siliques. Also expressed at lower level above ground and in flower buds.

Its subcellular location is the cell membrane. In terms of biological role, water channel required to facilitate the transport of water across cell membrane. Probably involved in root water uptake. Its function is impaired by Hg(2+). The chain is Aquaporin PIP2-1 (PIP2-1) from Arabidopsis thaliana (Mouse-ear cress).